The sequence spans 802 residues: Lon protease (802 aa).

Positions Leu-17–Arg-209 constitute a Lon N-terminal domain. Gly-363–Thr-370 is a binding site for ATP. The Lon proteolytic domain occupies Glu-599 to Pro-780. Active-site residues include Ser-686 and Lys-729.

Belongs to the peptidase S16 family. In terms of assembly, homohexamer. Organized in a ring with a central cavity.

It is found in the cytoplasm. The enzyme catalyses Hydrolysis of proteins in presence of ATP.. ATP-dependent serine protease that mediates the selective degradation of mutant and abnormal proteins as well as certain short-lived regulatory proteins. Required for cellular homeostasis and for survival from DNA damage and developmental changes induced by stress. Degrades polypeptides processively to yield small peptide fragments that are 5 to 10 amino acids long. Binds to DNA in a double-stranded, site-specific manner. In Roseiflexus castenholzii (strain DSM 13941 / HLO8), this protein is Lon protease.